We begin with the raw amino-acid sequence, 230 residues long: LexA repressor (230 aa).

A DNA-binding region (H-T-H motif) is located at residues 28-48; that stretch reads IREIGEALDIRSTNGVNDHLK. Residues Ser148 and Lys185 each act as for autocatalytic cleavage activity in the active site.

This sequence belongs to the peptidase S24 family. Homodimer.

It catalyses the reaction Hydrolysis of Ala-|-Gly bond in repressor LexA.. In terms of biological role, represses a number of genes involved in the response to DNA damage (SOS response), including recA and lexA. In the presence of single-stranded DNA, RecA interacts with LexA causing an autocatalytic cleavage which disrupts the DNA-binding part of LexA, leading to derepression of the SOS regulon and eventually DNA repair. This chain is LexA repressor, found in Anaeromyxobacter sp. (strain K).